The chain runs to 356 residues: NF-kappa-B inhibitor beta (356 aa).

Phosphoserine; by RPS6KA1 occurs at positions 19 and 23. ANK repeat units lie at residues 57-86 (DGDTALHLAVIHQHEPFLDFLLGFSAGTEY), 93-122 (LGQTALHLAAILGETSTVEKLYAAGAGLCV), and 126-155 (RGHTALHLACRVGAHACARALLQPRPRRPR). The tract at residues 149 to 193 (PRPRRPREAPDTYLAQGPDRTPDTNHTPVALYPDSDLEKEEEESE) is disordered. Position 183 is a phosphoserine (Ser-183). A compositionally biased stretch (acidic residues) spans 183–193 (SDLEKEEEESE). ANK repeat units lie at residues 206 to 235 (EGHTPLHVAVIHKDVEMVRLLRDAGADLDK), 240 to 269 (CGRSPLHLAVEAQAADVLELLLRAGANPAA), and 273 to 302 (GGRTPLGSAMLRPNPILARLLRAHGAPEPE). The tract at residues 298 to 356 (APEPEGEDEKSGPCSSSSDSDSGDEGDEYDDIVVHSSRSQTRLPPTPASKPLPDDPRPV) is disordered. Ser-313 and Ser-315 each carry phosphoserine; by CK2. Residues 318–328 (DSGDEGDEYDD) are compositionally biased toward acidic residues.

It belongs to the NF-kappa-B inhibitor family. In terms of assembly, interacts with THRB (via ligand-binding domain). Interacts with RELA and REL. Interacts with COMMD1. Interacts with inhibitor kappa B-interacting Ras-like NKIRAS1 and NKIRAS2. Post-translationally, phosphorylated by RPS6KA1; followed by degradation. Interaction with NKIRAS1 and NKIRAS2 probably prevents phosphorylation. Expressed in all tissues examined.

It is found in the cytoplasm. The protein localises to the nucleus. Functionally, inhibits NF-kappa-B by complexing with and trapping it in the cytoplasm. However, the unphosphorylated form resynthesized after cell stimulation is able to bind NF-kappa-B allowing its transport to the nucleus and protecting it to further NFKBIA-dependent inactivation. Association with inhibitor kappa B-interacting NKIRAS1 and NKIRAS2 prevent its phosphorylation rendering it more resistant to degradation, explaining its slower degradation. This is NF-kappa-B inhibitor beta (NFKBIB) from Homo sapiens (Human).